Reading from the N-terminus, the 457-residue chain is Peptidyl-prolyl cis-trans isomerase FKBP5 (457 aa).

An N-acetylmethionine modification is found at Met1. Positions 1–26 (MTTDEGAKNSGESPTATVAEQGEDIT) are disordered. A Phosphoserine modification is found at Ser13. Position 28 is an N6-acetyllysine (Lys28). The PPIase FKBP-type 1 domain occupies 50-138 (GDKVYVHYKG…FFEIELLDFK (89 aa)). Lys155 is subject to N6-acetyllysine. Residues 165–251 (GATVEIHLEG…IYEVTLKSFE (87 aa)) form the PPIase FKBP-type 2 domain. 3 TPR repeats span residues 268 to 301 (AAIV…LEME), 317 to 350 (LAAF…DSAN), and 351 to 384 (EKGL…NPQN). Positions 421–457 (AKEEANKAMGKKTSEGVTNEKGTDSSAVEEEKAEGHV) are disordered. Ser445 bears the Phosphoserine mark.

Part of a heteromultimeric cytoplasmic complex with HSP90AA1, HSPA1A/HSPA1B and steroid receptors. Upon ligand binding dissociates from the complex and FKBP4 takes its place. Interacts with functionally mature heterooligomeric progesterone receptor complexes along with HSP90 and TEBP. Interacts with NR3C1. Interacts with Akt/AKT1 and PHLPP1; enhancing dephosphorylation and subsequent activation of Akt/AKT1. Interacts with IFI44L; this interaction modulates the kinase activity of IKBKB and IKBKE. Interacts with IKBKB and IKBKE. Acetylation impairs ability to promote interaction between Akt/AKT1 and PHLPP1. Deacetylation by SIRT7 promotes interaction between Akt/AKT1 and PHLPP1, leading to suppress Akt/AKT1 activation. Post-translationally, ubiquitinated, leading to degradation in a proteasome-dependent manner. Deubiquitinated by USP49, leading to stabilization.

The protein resides in the cytoplasm. It is found in the nucleus. It catalyses the reaction [protein]-peptidylproline (omega=180) = [protein]-peptidylproline (omega=0). Inhibited by both FK506 and rapamycin. Its function is as follows. Immunophilin protein with PPIase and co-chaperone activities. Component of unligated steroid receptors heterocomplexes through interaction with heat-shock protein 90 (HSP90). Plays a role in the intracellular trafficking of heterooligomeric forms of steroid hormone receptors maintaining the complex into the cytoplasm when unliganded. Acts as a regulator of Akt/AKT1 activity by promoting the interaction between Akt/AKT1 and PHLPP1, thereby enhancing dephosphorylation and subsequent activation of Akt/AKT1. Interacts with IKBKE and IKBKB which facilitates IKK complex assembly leading to increased IKBKE and IKBKB kinase activity, NF-kappaB activation, and IFN production. This is Peptidyl-prolyl cis-trans isomerase FKBP5 (FKBP5) from Chlorocebus aethiops (Green monkey).